The following is a 71-amino-acid chain: Cold shock-like protein CspB (71 aa).

The 61-residue stretch at 7 to 67 (GLVKWFNADK…GAKGPAAANV (61 aa)) folds into the CSD domain.

Its subcellular location is the cytoplasm. This is Cold shock-like protein CspB (cspB) from Escherichia coli (strain K12).